Here is a 348-residue protein sequence, read N- to C-terminus: Endoglucanase-6B (348 aa).

Substrate contacts are provided by tryptophan 52 and serine 54. Active-site proton donor residues include aspartate 92 and aspartate 139. Substrate contacts are provided by asparagine 183, tryptophan 186, asparagine 222, tryptophan 282, lysine 310, and glutamate 314. A compositionally biased stretch (low complexity) spans 222–241 (NYNPYSTSNPPPYTSGSPSP). A disordered region spans residues 222-244 (NYNPYSTSNPPPYTSGSPSPDES).

It belongs to the glycosyl hydrolase 6 (cellulase B) family. As to quaternary structure, monomer.

The enzyme catalyses Endohydrolysis of (1-&gt;4)-beta-D-glucosidic linkages in cellulose, lichenin and cereal beta-D-glucans.. Plays a central role in the recycling of plant biomass. The biological conversion of cellulose to glucose generally requires three types of hydrolytic enzymes: (1) Endoglucanases which cut internal beta-1,4-glucosidic bonds; (2) Exocellobiohydrolases that cut the disaccharide cellobiose from the non-reducing end of the cellulose polymer chain; (3) Beta-1,4-glucosidases which hydrolyze the cellobiose and other short cello-oligosaccharides to glucose. This Humicola insolens (Soft-rot fungus) protein is Endoglucanase-6B.